A 92-amino-acid polypeptide reads, in one-letter code: Small ribosomal subunit protein uS19c (92 aa).

It belongs to the universal ribosomal protein uS19 family.

The protein localises to the plastid. Its subcellular location is the chloroplast. In terms of biological role, protein S19 forms a complex with S13 that binds strongly to the 16S ribosomal RNA. This Dioscorea elephantipes (Elephant's foot yam) protein is Small ribosomal subunit protein uS19c.